Reading from the N-terminus, the 614-residue chain is MHPLLNTITDPVKLRALDRKLLPQLADELRQFLVESVAKTGGHLSSNLGTVELTIALHYVFNTPYDRLVWDVGHQTYVHKILTGRREGMSKLRMRGGIAGFPRRDESEYDAFGTAHSSTSISAALGMAVASQWEGKKRSVVAVIGDGAMSAGMAFEALNNAGAMDTNLLVILNDNDMSISRPVGALNNYLARLMSGQFYATARRAGEKMLGVVPHVLELAKRAEEHVKGMVTPSTLFEEFGFNYIGPIDGHDLDVLVSTLNNIRNLRGPQFLHVVTRKGAGYKAAEDDPILYHGVTRFNPDAGIIPKASVKPSYTQVFGDWLCDMAALDQRLVGITPAMREGSGMVRFSHEYADRYFDVGIAEQHAVTFAAGLACDGLKPVVAIYSTFLQRAYDQLIHDVAIQNLPVVFAIDRAGLVGADGPTHAGSFDLTYLRCIPNITVMAPSDENECRQMLYTAFQMNTPAAVRYPRGSGSGVAQQKEMQMLPLGRGEIRREGAEIALLAFGSMLQPCLEAAEELNATVANMRFVKPLDDDLVASLAANHELLVTVEENTVMGGAGSAVLESLSARGRTVPVLQLGLPDTFLDQGDPSQMLSECGLDREGIVHAIRARFPK.

Thiamine diphosphate-binding positions include H74 and 115-117; that span reads AHS. D146 provides a ligand contact to Mg(2+). Thiamine diphosphate contacts are provided by residues 147-148, N175, Y282, and E363; that span reads GA. Mg(2+) is bound at residue N175.

The protein belongs to the transketolase family. DXPS subfamily. As to quaternary structure, homodimer. It depends on Mg(2+) as a cofactor. The cofactor is thiamine diphosphate.

The enzyme catalyses D-glyceraldehyde 3-phosphate + pyruvate + H(+) = 1-deoxy-D-xylulose 5-phosphate + CO2. The protein operates within metabolic intermediate biosynthesis; 1-deoxy-D-xylulose 5-phosphate biosynthesis; 1-deoxy-D-xylulose 5-phosphate from D-glyceraldehyde 3-phosphate and pyruvate: step 1/1. Catalyzes the acyloin condensation reaction between C atoms 2 and 3 of pyruvate and glyceraldehyde 3-phosphate to yield 1-deoxy-D-xylulose-5-phosphate (DXP). This Nitrosospira multiformis (strain ATCC 25196 / NCIMB 11849 / C 71) protein is 1-deoxy-D-xylulose-5-phosphate synthase.